Consider the following 425-residue polypeptide: Serine--tRNA ligase (425 aa).

230–232 (TAE) is an L-serine binding site. ATP is bound at residue 261 to 263 (RAE). Residue Glu284 coordinates L-serine. Residue 348-351 (EISS) participates in ATP binding. Residue Ser384 participates in L-serine binding.

This sequence belongs to the class-II aminoacyl-tRNA synthetase family. Type-1 seryl-tRNA synthetase subfamily. In terms of assembly, homodimer. The tRNA molecule binds across the dimer.

The protein localises to the cytoplasm. The catalysed reaction is tRNA(Ser) + L-serine + ATP = L-seryl-tRNA(Ser) + AMP + diphosphate + H(+). It carries out the reaction tRNA(Sec) + L-serine + ATP = L-seryl-tRNA(Sec) + AMP + diphosphate + H(+). It participates in aminoacyl-tRNA biosynthesis; selenocysteinyl-tRNA(Sec) biosynthesis; L-seryl-tRNA(Sec) from L-serine and tRNA(Sec): step 1/1. Catalyzes the attachment of serine to tRNA(Ser). Is also able to aminoacylate tRNA(Sec) with serine, to form the misacylated tRNA L-seryl-tRNA(Sec), which will be further converted into selenocysteinyl-tRNA(Sec). This chain is Serine--tRNA ligase, found in Desulforudis audaxviator (strain MP104C).